The sequence spans 464 residues: Argininosuccinate lyase (464 aa).

It belongs to the lyase 1 family. Argininosuccinate lyase subfamily.

It localises to the cytoplasm. It carries out the reaction 2-(N(omega)-L-arginino)succinate = fumarate + L-arginine. It functions in the pathway amino-acid biosynthesis; L-arginine biosynthesis; L-arginine from L-ornithine and carbamoyl phosphate: step 3/3. The protein is Argininosuccinate lyase of Pseudomonas aeruginosa (strain UCBPP-PA14).